The chain runs to 89 residues: Small ribosomal subunit protein uS19 (89 aa).

Belongs to the universal ribosomal protein uS19 family.

Its function is as follows. Protein S19 forms a complex with S13 that binds strongly to the 16S ribosomal RNA. The protein is Small ribosomal subunit protein uS19 of Xylella fastidiosa (strain M12).